A 1037-amino-acid chain; its full sequence is Serine/threonine-protein kinase ULK2 (1037 aa).

The region spanning 9–271 (YCKRDLVGHG…FEAFFSHPFL (263 aa)) is the Protein kinase domain. Residues 15–23 (VGHGAFAVV) and K39 contribute to the ATP site. D131 functions as the Proton acceptor in the catalytic mechanism. The disordered stretch occupies residues 319-350 (ENLSSPPLGPPNYLQVSKDSASNSSKNSSCDT). Over residues 335–348 (SKDSASNSSKNSSC) the composition is skewed to low complexity. S430 carries the phosphoserine modification. 4 disordered regions span residues 452-480 (CSPV…PSPL), 494-515 (GHPQ…PQTQ), 540-594 (QKLR…KTPL), and 626-697 (HGPA…NTER). Composition is skewed to polar residues over residues 506–515 (SSGSPVPQTQ) and 571–585 (LGTS…SPRN). Positions 632–643 (QSKDGNDPRECS) are enriched in basic and acidic residues. The span at 658–678 (QQQSKAVFGRSVSTGKLSEQQ) shows a compositional bias: polar residues. 2 positions are modified to phosphoserine: S772 and S781. The CTD-like region stretch occupies residues 813-1037 (ELPEETLMER…SALCCSTATV (225 aa)).

The protein belongs to the protein kinase superfamily. Ser/Thr protein kinase family. APG1/unc-51/ULK1 subfamily. Component of a complex consisting of ATG13/KIAA0652, ULK1 and RB1CC1/FIP200. Interacts (via C-terminus) with ATG13/KIAA0652. Associates with the mammalian target of rapamycin complex 1 (mTORC1) through an interaction with RPTOR. Interacts with SYNGAP1. Autophosphorylated. In response to nutrient limitation, probably phosphorylated and activated by AMPK, leading to activate autophagy. Widely expressed.

Its subcellular location is the cytoplasmic vesicle membrane. It carries out the reaction L-seryl-[protein] + ATP = O-phospho-L-seryl-[protein] + ADP + H(+). The catalysed reaction is L-threonyl-[protein] + ATP = O-phospho-L-threonyl-[protein] + ADP + H(+). Serine/threonine-protein kinase involved in autophagy in response to starvation. Acts upstream of phosphatidylinositol 3-kinase PIK3C3 to regulate the formation of autophagophores, the precursors of autophagosomes. Part of regulatory feedback loops in autophagy: acts both as a downstream effector and a negative regulator of mammalian target of rapamycin complex 1 (mTORC1) via interaction with RPTOR. Activated via phosphorylation by AMPK, also acts as a negative regulator of AMPK through phosphorylation of the AMPK subunits PRKAA1, PRKAB2 and PRKAG1. May phosphorylate ATG13/KIAA0652, FRS2, FRS3 and RPTOR; however such data need additional evidences. Not involved in ammonia-induced autophagy or in autophagic response of cerebellar granule neurons (CGN) to low potassium concentration. Plays a role early in neuronal differentiation and is required for granule cell axon formation: may govern axon formation via Ras-like GTPase signaling and through regulation of the Rab5-mediated endocytic pathways within developing axons. This chain is Serine/threonine-protein kinase ULK2 (Ulk2), found in Mus musculus (Mouse).